Reading from the N-terminus, the 460-residue chain is uncharacterized protein (460 aa).

This is an uncharacterized protein from Haemophilus influenzae (strain ATCC 51907 / DSM 11121 / KW20 / Rd).